A 276-amino-acid chain; its full sequence is Urease accessory protein UreD (276 aa).

Belongs to the UreD family. As to quaternary structure, ureD, UreF and UreG form a complex that acts as a GTP-hydrolysis-dependent molecular chaperone, activating the urease apoprotein by helping to assemble the nickel containing metallocenter of UreC. The UreE protein probably delivers the nickel.

Its subcellular location is the cytoplasm. In terms of biological role, required for maturation of urease via the functional incorporation of the urease nickel metallocenter. The chain is Urease accessory protein UreD from Bradyrhizobium diazoefficiens (strain JCM 10833 / BCRC 13528 / IAM 13628 / NBRC 14792 / USDA 110).